We begin with the raw amino-acid sequence, 291 residues long: uncharacterized protein (291 aa).

3 disordered regions span residues 1-62 (MELR…SSKK), 220-242 (PLPA…TDKV), and 255-291 (ENNK…SRKK). The segment covering 18–41 (EPAKNKSERSIESNERVGTREAKS) has biased composition (basic and acidic residues). Composition is skewed to polar residues over residues 42 to 58 (ENTS…ATTD) and 226 to 236 (PSLNLSPQKVP). The residue at position 267 (Ser267) is a Phosphoserine.

The protein resides in the cytoplasm. The protein localises to the nucleus. This is an uncharacterized protein from Saccharomyces cerevisiae (strain ATCC 204508 / S288c) (Baker's yeast).